The chain runs to 468 residues: Glycosyl hydrolase family 109 protein (468 aa).

The first 19 residues, 1–19 (MVYKVFLSLCIGLALSASA), serve as a signal peptide directing secretion. NAD(+) is bound by residues 67–68 (MR), aspartate 89, 138–141 (WKTH), 158–159 (EV), and asparagine 187. Substrate is bound by residues tyrosine 216, arginine 232, 244–247 (YATH), and tyrosine 322. Tyrosine 244 is a binding site for NAD(+).

It belongs to the Gfo/Idh/MocA family. Glycosyl hydrolase 109 subfamily. NAD(+) serves as cofactor.

Functionally, glycosidase. This chain is Glycosyl hydrolase family 109 protein, found in Porphyromonas gingivalis (strain ATCC BAA-308 / W83).